The primary structure comprises 329 residues: Cytosolic arginine sensor for mTORC1 subunit 2 (329 aa).

ACT domains lie at 72–139 (ADAT…MHTL) and 262–322 (ELWK…NALQ).

It belongs to the GATS family. May form homodimers and heterodimers.

Its subcellular location is the cytoplasm. The protein resides in the cytosol. Functions as a negative regulator of the TORC1 signaling pathway. The protein is Cytosolic arginine sensor for mTORC1 subunit 2 of Xenopus tropicalis (Western clawed frog).